The sequence spans 670 residues: Beta-lactam-inducible penicillin-binding protein (670 aa).

The chain crosses the membrane as a helical span at residues 4–24 (IKIVPLILIVVVVGFGIYFYA). Residues serine 25 and serine 405 each coordinate a penicillin. Serine 405 functions as the Acyl-ester intermediate in the catalytic mechanism.

The protein belongs to the transpeptidase family.

The protein localises to the cell membrane. The sequence is that of Beta-lactam-inducible penicillin-binding protein (pbp) from Staphylococcus aureus.